Reading from the N-terminus, the 379-residue chain is ATP phosphoribosyltransferase regulatory subunit (379 aa).

Belongs to the class-II aminoacyl-tRNA synthetase family. HisZ subfamily. Heteromultimer composed of HisG and HisZ subunits.

The protein resides in the cytoplasm. It functions in the pathway amino-acid biosynthesis; L-histidine biosynthesis; L-histidine from 5-phospho-alpha-D-ribose 1-diphosphate: step 1/9. Required for the first step of histidine biosynthesis. May allow the feedback regulation of ATP phosphoribosyltransferase activity by histidine. The polypeptide is ATP phosphoribosyltransferase regulatory subunit (Gluconobacter oxydans (strain 621H) (Gluconobacter suboxydans)).